We begin with the raw amino-acid sequence, 796 residues long: U-box domain-containing protein 51 (796 aa).

3 disordered regions span residues 163-195, 218-240, and 270-292; these read DMDT…SSHQ, TNIG…SLDV, and RSSQ…SSSQ. Over residues 171–181 the composition is skewed to basic and acidic residues; that stretch reads ADDRSESRFSS. A compositionally biased stretch (low complexity) spans 182–195; the sequence is DSHSGTVSSTSSHQ. Low complexity predominate over residues 270 to 291; that stretch reads RSSQMEEASSSSTYSDPTSSSS. The stretch at 298–407 forms a coiled coil; the sequence is ELEKLKIELR…QRLEDALEGG (110 aa). One can recognise a Protein kinase domain in the interval 429 to 700; the sequence is FSDELKIGVG…DLGKEILPVL (272 aa). ATP is bound by residues 435 to 443 and Lys-456; that span reads IGVGGYGSV. Asp-557 (proton acceptor) is an active-site residue. A U-box domain is found at 724 to 796; it reads NAPTHFYCPI…IKEWRSQLIK (73 aa).

The protein belongs to the protein kinase superfamily. Ser/Thr protein kinase family.

The enzyme catalyses L-seryl-[protein] + ATP = O-phospho-L-seryl-[protein] + ADP + H(+). The catalysed reaction is L-threonyl-[protein] + ATP = O-phospho-L-threonyl-[protein] + ADP + H(+). It catalyses the reaction S-ubiquitinyl-[E2 ubiquitin-conjugating enzyme]-L-cysteine + [acceptor protein]-L-lysine = [E2 ubiquitin-conjugating enzyme]-L-cysteine + N(6)-ubiquitinyl-[acceptor protein]-L-lysine.. The protein operates within protein modification; protein ubiquitination. Its function is as follows. Functions as an E3 ubiquitin ligase. This Arabidopsis thaliana (Mouse-ear cress) protein is U-box domain-containing protein 51 (PUB51).